Consider the following 208-residue polypeptide: Large ribosomal subunit protein bL25 (208 aa).

This sequence belongs to the bacterial ribosomal protein bL25 family. CTC subfamily. Part of the 50S ribosomal subunit; part of the 5S rRNA/L5/L18/L25 subcomplex. Contacts the 5S rRNA. Binds to the 5S rRNA independently of L5 and L18.

This is one of the proteins that binds to the 5S RNA in the ribosome where it forms part of the central protuberance. In Paracoccus denitrificans (strain Pd 1222), this protein is Large ribosomal subunit protein bL25.